We begin with the raw amino-acid sequence, 283 residues long: Transmembrane protein 119 (283 aa).

Positions 1-25 are cleaved as a signal peptide; the sequence is MVSAAAPSLLILLLLLLGSVPATDA. Residues 26-96 are Extracellular-facing; that stretch reads RSVPLKATFL…IVDFFRQYVM (71 aa). Serine 41 carries O-linked (Xyl...) (chondroitin sulfate) serine glycosylation. The span at 43 to 52 shows a compositional bias: low complexity; it reads EAEGSSASSP. Residues 43–76 are disordered; sequence EAEGSSASSPSLPPPWTPALSPTSMGPQPITLGG. Residues 97-117 traverse the membrane as a helical segment; the sequence is LIAVVGSLAFLLMFIVCAAVI. Residues 118–283 are Cytoplasmic-facing; the sequence is TRQKQKASAY…CACSSVHPSV (166 aa). Disordered stretches follow at residues 136–168 and 183–283; these read KYVD…ALDS and LKSP…HPSV. 2 stretches are compositionally biased toward basic and acidic residues: residues 153-164 and 198-213; these read VPDRAPDSRPEE and RMVE…KGSQ. The span at 238 to 264 shows a compositional bias: low complexity; the sequence is GVLEGAVVAGEGQGELEGSLLLAQEAQ. Residue serine 272 is modified to Phosphoserine.

Interacts with SMAD1, SMAD5 and RUNX2. Expressed in brain microglia (at protein level). Detected in urine (at protein level). Elevated expression levels seen in the brain of patients with Alzheimer disease. Expressed by osteoblast-like cells in bone tissues and follicular dendritic cells in lymphoid tissues.

It is found in the cell membrane. Its subcellular location is the cytoplasm. It localises to the endoplasmic reticulum membrane. The protein resides in the secreted. Functionally, plays an important role in bone formation and normal bone mineralization. Promotes the differentiation of myoblasts into osteoblasts. May induce the commitment and differentiation of myoblasts into osteoblasts through an enhancement of BMP2 production and interaction with the BMP-RUNX2 pathway. Up-regulates the expression of ATF4, a transcription factor which plays a central role in osteoblast differentiation. Essential for normal spermatogenesis and late testicular differentiation. In Homo sapiens (Human), this protein is Transmembrane protein 119 (TMEM119).